Reading from the N-terminus, the 507-residue chain is Extracellular elastase (507 aa).

A signal peptide spans 1–28; it reads MKNFSKFALTSIAALTVASPLVNTEVDA. A propeptide spanning residues 29 to 207 is cleaved from the precursor; sequence KDKVSATQNI…VVDKLNMIKE (179 aa). D347 provides a ligand contact to Ca(2+). H351 lines the Zn(2+) pocket. Residue E352 is part of the active site. The Zn(2+) site is built by H355 and E375. D386, E388, D389, L391, E394, Y397, T398, V401, and D404 together coordinate Ca(2+). H435 functions as the Proton donor in the catalytic mechanism.

Belongs to the peptidase M4 family. It depends on Ca(2+) as a cofactor. The cofactor is Zn(2+).

Its subcellular location is the secreted. Its function is as follows. Protease that has a low substrate specificity. Glucagon is preferentially cleaved between aromatic (Phe) and hydrophobic (Val) amino acids. Hydrolyzes casein and elastin. In Staphylococcus epidermidis (strain ATCC 12228 / FDA PCI 1200), this protein is Extracellular elastase (sepA).